Consider the following 612-residue polypeptide: MSKRVLTSVAWPYANGPRHIGHVAGFGVPSDVFARYQRMAGNEVLMVSGTDEHGTPLLVQAEKEGTTVQELADRYNRIIVEDLAGLGLSYDLFTRTTTRNHYAVVQELFTGLYNNGYMVTQTTRGAISPSTGRTLPDRYIEGTCPICGAKDARGDQCDNCGNQLDPEDLIDPRSKINGETPEFIDTEHFMLDLPALAEALTTWLKGRTDWRPNVLKFSLNLLEDIRPRAMSRDIDWGVPIPVEGWQDNNAKKLYVWFDAVVGYLSASIEWAWRIGDPDAWRKWWNDPEALSYYFMGKDNITFHSQIWPAELLGYGGQGSKGGEAGDLADPALNLPTEVVSSEFLTMSGSKFSSSKGVVIYVRDFLKEFGPDALRYFIATAGPETTDTDFTWDEFVRRINSELANEWGNLVNRTVSMAYKNFGEVPTPGPLTAEDEALLAESAKAFDVVGDNINLSRFKAGITEAMRIAGRANQYIAAMEPWKLAKDENQRERLATVLYTALQVVSDVNTLLTPYLPFSAQKIFETLGGEGIWAAQPEVVEVTDESPREPVGVGLPEEGRTYPVIMGDYTKQKVTWARQEIQPGTQLSKPKPLFPKLDPELAETGPEWAPVQK.

A 'HIGH' region motif is present at residues 12–22 (PYANGPRHIGH). Positions 144, 147, 157, and 160 each coordinate Zn(2+). Residues 350-354 (KFSSS) carry the 'KMSKS' region motif. Serine 353 provides a ligand contact to ATP. A disordered region spans residues 580-612 (IQPGTQLSKPKPLFPKLDPELAETGPEWAPVQK).

Belongs to the class-I aminoacyl-tRNA synthetase family. MetG type 1 subfamily. Monomer. Requires Zn(2+) as cofactor.

It is found in the cytoplasm. The catalysed reaction is tRNA(Met) + L-methionine + ATP = L-methionyl-tRNA(Met) + AMP + diphosphate. In terms of biological role, is required not only for elongation of protein synthesis but also for the initiation of all mRNA translation through initiator tRNA(fMet) aminoacylation. The chain is Methionine--tRNA ligase from Corynebacterium jeikeium (strain K411).